A 1485-amino-acid chain; its full sequence is Sex-determining transformer protein 2 (1485 aa).

Residues methionine 1–isoleucine 28 form the signal peptide. Helical transmembrane passes span valine 438–tryptophan 458, isoleucine 490–leucine 510, tryptophan 584–isoleucine 604, glycine 732–isoleucine 752, leucine 923–threonine 943, leucine 950–phenylalanine 970, aspartate 980–phenylalanine 1000, alanine 1033–valine 1053, and threonine 1063–alanine 1083. An interaction with fem-3 region spans residues aspartate 1131 to lysine 1271. Residues tyrosine 1143 to asparagine 1175 form a disordered region. Residues alanine 1181–leucine 1201 traverse the membrane as a helical segment. 3 disordered regions span residues serine 1228 to glutamate 1252, glutamate 1275 to arginine 1306, and glutamate 1348 to proline 1384. Over residues glutamate 1275–glutamine 1284 the composition is skewed to basic and acidic residues. Positions cysteine 1401–arginine 1422 are MX regulatory domain; required for tra-1 binding. Residues proline 1442–leucine 1485 form a disordered region. Basic and acidic residues predominate over residues alanine 1456 to aspartate 1472.

As to quaternary structure, interacts with tra-1 and fem-3. Somatic and germline tissues.

The protein localises to the membrane. In terms of biological role, plays a major role in controlling sexual cell fates. Promotes female development in XX animals where it sequesters one or more of the FEM proteins to the membrane thereby freeing the tra-1 protein (a putative transcription factor) to enter the nucleus and promote female development. In XO animals it acts as a receptor for her-1 which prevents it from binding to FEM proteins thereby repressing the activity of tra-1. Negatively regulates male development when bound to fem-3 and is required together with tra-1 for promoting spermatogenesis. This chain is Sex-determining transformer protein 2, found in Caenorhabditis remanei (Caenorhabditis vulgaris).